The sequence spans 101 residues: Large ribosomal subunit protein bL21 (101 aa).

It belongs to the bacterial ribosomal protein bL21 family. Part of the 50S ribosomal subunit. Contacts protein L20.

In terms of biological role, this protein binds to 23S rRNA in the presence of protein L20. In Corynebacterium aurimucosum (strain ATCC 700975 / DSM 44827 / CIP 107346 / CN-1) (Corynebacterium nigricans), this protein is Large ribosomal subunit protein bL21.